A 269-amino-acid polypeptide reads, in one-letter code: E3 ubiquitin-protein ligase complex slx8-rfp subunit slx8 (269 aa).

Over residues 1–10 (MPPAHKRDTN) the composition is skewed to basic and acidic residues. Disordered stretches follow at residues 1–75 (MPPA…LNRA) and 166–196 (PRKQKFEQGKNPSTTNAEIEKEEPSKKQVVP). The segment covering 60 to 70 (PSGTTSENESL) has biased composition (polar residues). Residues 206 to 247 (CVICLDSPENLSCTPCGHIFCNFCILSALGTTAATQKCPVCR) form an RING-type zinc finger.

As to quaternary structure, part of an E3 ubiquitin complex including rfp1, rfp2 and slx8. Interacts with rfp1 and rfp2.

It is found in the nucleus. The enzyme catalyses S-ubiquitinyl-[E2 ubiquitin-conjugating enzyme]-L-cysteine + [acceptor protein]-L-lysine = [E2 ubiquitin-conjugating enzyme]-L-cysteine + N(6)-ubiquitinyl-[acceptor protein]-L-lysine.. The protein operates within protein modification; protein ubiquitination. In terms of biological role, mediates ubiquitination and subsequent desumoylation/degradation of sumoylated proteins and proteins containing SUMO-like domains. Acts as a critical suppressor of gross chromosomal rearrangements (GCRs) during normal cell cycle progression. Involved in stabilizing, restarting or resolving transiently stalled replication forks. Prevents accumulation of DNA damage during cell cycle progression. In Schizosaccharomyces pombe (strain 972 / ATCC 24843) (Fission yeast), this protein is E3 ubiquitin-protein ligase complex slx8-rfp subunit slx8 (slx8).